A 589-amino-acid polypeptide reads, in one-letter code: Aspartate--tRNA ligase (589 aa).

E172 lines the L-aspartate pocket. An aspartate region spans residues 196-199; that stretch reads QLFK. Position 218 (R218) interacts with L-aspartate. ATP contacts are provided by residues 218–220 and Q227; that span reads RDE. H449 is an L-aspartate binding site. Position 483 (E483) interacts with ATP. R490 lines the L-aspartate pocket. ATP is bound at residue 535–538; sequence GLDR.

The protein belongs to the class-II aminoacyl-tRNA synthetase family. Type 1 subfamily. In terms of assembly, homodimer.

The protein resides in the cytoplasm. The catalysed reaction is tRNA(Asp) + L-aspartate + ATP = L-aspartyl-tRNA(Asp) + AMP + diphosphate. Its function is as follows. Catalyzes the attachment of L-aspartate to tRNA(Asp) in a two-step reaction: L-aspartate is first activated by ATP to form Asp-AMP and then transferred to the acceptor end of tRNA(Asp). The protein is Aspartate--tRNA ligase of Haemophilus ducreyi (strain 35000HP / ATCC 700724).